A 353-amino-acid chain; its full sequence is Protein RecA (353 aa).

67–74 (GPESSGKT) is a binding site for ATP.

Belongs to the RecA family.

The protein localises to the cytoplasm. Functionally, can catalyze the hydrolysis of ATP in the presence of single-stranded DNA, the ATP-dependent uptake of single-stranded DNA by duplex DNA, and the ATP-dependent hybridization of homologous single-stranded DNAs. It interacts with LexA causing its activation and leading to its autocatalytic cleavage. The polypeptide is Protein RecA (Salmonella agona (strain SL483)).